We begin with the raw amino-acid sequence, 1032 residues long: Toll-like receptor 9 (1032 aa).

Residues 1 to 25 (MGFCRSALHPLSLLVQAIMLAMTLA) form the signal peptide. Topologically, residues 26–818 (LGTLPAFLPC…CLDEALSWDC (793 aa)) are extracellular. C35 and C45 are oxidised to a cystine. 47–51 (WLFLK) provides a ligand contact to DNA. 14 LRR repeats span residues 62 to 85 (RGNVTSLSLSSNRIHHLHDSDFAH), 87 to 110 (PSLRHLNLKWNCPPVGLSPMHFPC), 122 to 147 (VPTLEELNLSYNNIMTVPALPKSLIS), 150 to 166 (LSHTNILMLDSASLAGL), 167 to 190 (HALRFLFMDGNCYYKNPCRQALEV), 198 to 221 (LGNLTHLSLKYNNLTVVPRNLPSS), 223 to 242 (EYLLLSYNRIVKLAPEDLAN), 243 to 268 (LTALRVLDVGGNCRRCDHAPNPCMEC), 283 to 306 (LSRLEGLVLKDSSLSWLNASWFRG), 308 to 332 (GNLRVLDLSENFLYKCITKTKAFQG), 333 to 356 (LTQLRKLNLSFNYQKRVSFAHLSL), 363 to 386 (LVALKELDMHGIFFRSLDETTLRP), 390 to 413 (LPMLQTLRLQMNFINQAQLGIFRA), and 415 to 440 (PGLRYVDLSDNRISGASELTATMGEA). N-linked (GlcNAc...) asparagine glycosylation occurs at N64. DNA-binding positions include 72–77 (SNRIHH) and 95–109 (KWNCPPVGLSPMHFP). Residues C98 and C110 are joined by a disulfide bond. N129 carries an N-linked (GlcNAc...) asparagine glycan. Y132 provides a ligand contact to DNA. A disulfide bridge links C178 with C184. 179–181 (YYK) provides a ligand contact to DNA. N200 carries an N-linked (GlcNAc...) asparagine glycan. Y208 lines the DNA pocket. Residues N210 and N242 are each glycosylated (N-linked (GlcNAc...) asparagine). Cystine bridges form between C255–C268 and C258–C265. S-palmitoyl cysteine attachment occurs at residues C258 and C265. Residue N300 is glycosylated (N-linked (GlcNAc...) asparagine). Residue N340 is glycosylated (N-linked (GlcNAc...) asparagine). N-linked (GlcNAc...) asparagine glycans are attached at residues N469, N474, and N513. 12 LRR repeats span residues 470 to 494 (CSTLNFTLDLSRNNLVTVQPEMFAQ), 496 to 519 (SHLQCLRLSHNCISQAVNGSQFLP), 520 to 543 (LTGLQVLDLSHNKLDLYHEHSFTE), 545 to 572 (PRLEALDLSYNSQPFGMQGVGHNFSFVA), 574 to 598 (LRTLRHLSLAHNNIHSQVSQQLCST), 600 to 622 (LRALDFSGNALGHMWAEGDLYLH), 627 to 650 (LSGLIWLDLSQNRLHTLLPQTLRN), 652 to 675 (PKSLQVLRLRDNYLAFFKWWSLHF), 676 to 699 (LPKLEVLDLAGNQLKALTNGSLPA), 701 to 723 (TRLRRLDVSCNSISFVAPGFFSK), 724 to 747 (AKELRELNLSANALKTVDHSWFGP), and 749 to 772 (ASALQILDVSANPLHCACGAAFMD). Residues C470 and C500 are joined by a disulfide bond. N567 carries an N-linked (GlcNAc...) asparagine glycan. The N-linked (GlcNAc...) asparagine glycan is linked to N694. Residue N731 is glycosylated (N-linked (GlcNAc...) asparagine). Disulfide bonds link C764/C790 and C766/C809. Residues 819–839 (FALSLLAVALGLGVPMLHHLC) form a helical membrane-spanning segment. The Cytoplasmic portion of the chain corresponds to 840–1032 (GWDLWYCFHL…RNFCQGPTAE (193 aa)). In terms of domain architecture, TIR spans 868-1013 (LPYDAFVVFD…SFWAQLGMAL (146 aa)).

It belongs to the Toll-like receptor family. In terms of assembly, monomer and homodimer. Exists as a monomer in the absence of unmethylated cytidine-phosphate-guanosine (CpG) ligand. Proteolytic processing of an insertion loop (Z-loop) is required for homodimerization upon binding to the unmethylated CpG ligand leading to its activation. Interacts with MYD88 via their respective TIR domains. Interacts with BTK. Interacts (via transmembrane domain) with UNC93B1. Interacts with CD300LH; the interaction may promote full activation of TLR9-triggered innate responses. Interacts with CNPY3 and HSP90B1; this interaction is required for proper folding in the endoplasmic reticulum. Interacts with SMPDL3B. Interacts with CD82; this interaction is essential for TLR9-dependent myddosome formation in response to CpG stimulation. Activated by proteolytic cleavage of the flexible loop between repeats LRR14 and LRR15 within the ectodomain. Cleavage requires UNC93B1. Proteolytically processed by first removing the majority of the ectodomain by either asparagine endopeptidase (AEP) or a cathepsin followed by a trimming event that is solely cathepsin mediated and required for optimal receptor signaling. Post-translationally, palmitoylated by ZDHHC3 in the Golgi regulates TLR9 trafficking from the Golgi to endosomes. Depalmitoylation by PPT1 controls the release of TLR9 from UNC93B1 in endosomes. Highly expressed in spleen, lymph node, tonsil and peripheral blood leukocytes, especially in plasmacytoid pre-dendritic cells. Levels are much lower in monocytes and CD11c+ immature dendritic cells. Also detected in lung and liver.

It localises to the endoplasmic reticulum membrane. The protein localises to the early endosome membrane. It is found in the lysosome. Its subcellular location is the cytoplasmic vesicle. The protein resides in the phagosome. It localises to the golgi apparatus membrane. Key component of innate and adaptive immunity. TLRs (Toll-like receptors) control host immune response against pathogens through recognition of molecular patterns specific to microorganisms. TLR9 is a nucleotide-sensing TLR which is activated by unmethylated cytidine-phosphate-guanosine (CpG) dinucleotides. Acts via MYD88 and TRAF6, leading to NF-kappa-B activation, cytokine secretion and the inflammatory response. Controls lymphocyte response to Helicobacter infection. Upon CpG stimulation, induces B-cell proliferation, activation, survival and antibody production. The polypeptide is Toll-like receptor 9 (TLR9) (Homo sapiens (Human)).